The sequence spans 241 residues: MAGHSKWANIKHKKAAADAKRGKIWTRLIKEITVAARLGGGDADSNPRLRLAMDKATDANMPKDNINRAIQRGVGGLEGANYEEIRYEGYGINGAAVIVDCLTDNRTRTVAEVRHGFDKYGGNMGTSGSVAFLFDHIGQFIFAPGTPEDKLMDAALEAGADDVITHDDGSLEVICPPHDFAKVKTALEAAGFKAELAEVIMKPQTEVVFTGEDAVKMQKLLDVLENLDDVQEVFTNAVIGE.

It belongs to the TACO1 family.

The protein resides in the cytoplasm. The polypeptide is Probable transcriptional regulatory protein Rpic_2388 (Ralstonia pickettii (strain 12J)).